A 154-amino-acid polypeptide reads, in one-letter code: Myoglobin (154 aa).

The Globin domain occupies 2-148; that stretch reads GLSDQEWQHV…FRNDMASKYK (147 aa). Residue His-65 participates in nitrite binding. His-65 is a binding site for O2. Residue His-94 coordinates heme b.

In terms of assembly, monomeric.

Its subcellular location is the cytoplasm. The protein localises to the sarcoplasm. It carries out the reaction Fe(III)-heme b-[protein] + nitric oxide + H2O = Fe(II)-heme b-[protein] + nitrite + 2 H(+). The enzyme catalyses H2O2 + AH2 = A + 2 H2O. Monomeric heme protein which primary function is to store oxygen and facilitate its diffusion within muscle tissues. Reversibly binds oxygen through a pentacoordinated heme iron and enables its timely and efficient release as needed during periods of heightened demand. Depending on the oxidative conditions of tissues and cells, and in addition to its ability to bind oxygen, it also has a nitrite reductase activity whereby it regulates the production of bioactive nitric oxide. Under stress conditions, like hypoxia and anoxia, it also protects cells against reactive oxygen species thanks to its pseudoperoxidase activity. This is Myoglobin from Dromaius novaehollandiae (Emu).